Reading from the N-terminus, the 68-residue chain is uncharacterized protein (68 aa).

Residues 1–27 form the signal peptide; that stretch reads MKGLLCFIYILSAILIGCVFLNKDVEA.

This is an uncharacterized protein from Invertebrate iridescent virus 6 (IIV-6).